The following is a 527-amino-acid chain: Light-independent protochlorophyllide reductase subunit B (527 aa).

Residue aspartate 36 coordinates [4Fe-4S] cluster. Catalysis depends on aspartate 290, which acts as the Proton donor. Position 425–426 (425–426) interacts with substrate; it reads GL.

This sequence belongs to the ChlB/BchB/BchZ family. In terms of assembly, protochlorophyllide reductase is composed of three subunits; ChlL, ChlN and ChlB. Forms a heterotetramer of two ChlB and two ChlN subunits. [4Fe-4S] cluster is required as a cofactor.

The catalysed reaction is chlorophyllide a + oxidized 2[4Fe-4S]-[ferredoxin] + 2 ADP + 2 phosphate = protochlorophyllide a + reduced 2[4Fe-4S]-[ferredoxin] + 2 ATP + 2 H2O. It functions in the pathway porphyrin-containing compound metabolism; chlorophyll biosynthesis (light-independent). In terms of biological role, component of the dark-operative protochlorophyllide reductase (DPOR) that uses Mg-ATP and reduced ferredoxin to reduce ring D of protochlorophyllide (Pchlide) to form chlorophyllide a (Chlide). This reaction is light-independent. The NB-protein (ChlN-ChlB) is the catalytic component of the complex. The sequence is that of Light-independent protochlorophyllide reductase subunit B from Synechococcus sp. (strain RCC307).